The primary structure comprises 202 residues: uncharacterized protein (202 aa).

Residues 1–20 are disordered; that stretch reads MVGAVTQIADRPTDPSPWSP. The HTH tetR-type domain maps to 19–79; the sequence is SPRETELLAV…AAFIEGIRQV (61 aa).

This is an uncharacterized protein from Mycobacterium bovis (strain ATCC BAA-935 / AF2122/97).